The following is a 340-amino-acid chain: Putative RRN3-like protein RRN3P2 (340 aa).

It belongs to the RRN3 family.

In Homo sapiens (Human), this protein is Putative RRN3-like protein RRN3P2 (RRN3P2).